Here is a 478-residue protein sequence, read N- to C-terminus: Glycogen synthase (478 aa).

An ADP-alpha-D-glucose-binding site is contributed by K15.

The protein belongs to the glycosyltransferase 1 family. Bacterial/plant glycogen synthase subfamily.

The enzyme catalyses [(1-&gt;4)-alpha-D-glucosyl](n) + ADP-alpha-D-glucose = [(1-&gt;4)-alpha-D-glucosyl](n+1) + ADP + H(+). Its pathway is glycan biosynthesis; glycogen biosynthesis. Functionally, synthesizes alpha-1,4-glucan chains using ADP-glucose. In Clostridium botulinum (strain Alaska E43 / Type E3), this protein is Glycogen synthase.